The following is a 115-amino-acid chain: uncharacterized protein (115 aa).

This is an uncharacterized protein from Acanthamoeba polyphaga (Amoeba).